The primary structure comprises 358 residues: Alternative oxidase, mitochondrial (358 aa).

Residues 152–172 (LIRMVFLESVAGVPGMVAGML) form a helical membrane-spanning segment. The Fe cation site is built by Glu-159, Glu-198, and His-201. Residues 217–237 (FMIIGAQGVFFNSMFLSYLIS) traverse the membrane as a helical segment. Positions 249, 250, 306, and 309 each coordinate Fe cation.

This sequence belongs to the alternative oxidase family. It depends on Fe cation as a cofactor.

The protein localises to the mitochondrion inner membrane. Functionally, catalyzes cyanide-resistant oxygen consumption. May increase respiration when the cytochrome respiratory pathway is restricted, or in response to low temperatures. The polypeptide is Alternative oxidase, mitochondrial (Blumeria graminis (Powdery mildew)).